The primary structure comprises 327 residues: Ventral anterior homeobox 1 (327 aa).

Residues 1–34 (MFGKQDKMDVRCSTETEANRVSKNGHKEGKDSKG) are compositionally biased toward basic and acidic residues. The interval 1 to 41 (MFGKQDKMDVRCSTETEANRVSKNGHKEGKDSKGAEGNIST) is disordered. A DNA-binding region (homeobox) is located at residues 99–158 (PKRTRTSFTAEQLYRLEMEFQRCQYVVGRERTELARQLNLSETQVKVWFQNRRTKQKKDQ). Low complexity predominate over residues 230 to 245 (APAGGSPHPPSAGTAA). The interval 230–249 (APAGGSPHPPSAGTAAGPPP) is disordered.

It belongs to the EMX homeobox family.

The protein localises to the nucleus. In terms of biological role, transcription factor that plays a role in establishing dorsal-ventral polarity in the neural retina. In Gallus gallus (Chicken), this protein is Ventral anterior homeobox 1 (VAX1).